A 137-amino-acid chain; its full sequence is Small ribosomal subunit protein uS11A (137 aa).

The residue at position 2 (Ser-2) is an N-acetylserine. A disordered region spans residues 117–137 (DVTPVPSDSTRKKGGRRGRRL). The segment covering 128–137 (KKGGRRGRRL) has biased composition (basic residues).

Belongs to the universal ribosomal protein uS11 family. In terms of assembly, component of the small ribosomal subunit (SSU). Mature yeast ribosomes consist of a small (40S) and a large (60S) subunit. The 40S small subunit contains 1 molecule of ribosomal RNA (18S rRNA) and 33 different proteins (encoded by 57 genes). The large 60S subunit contains 3 rRNA molecules (25S, 5.8S and 5S rRNA) and 46 different proteins (encoded by 81 genes). uS11 interacts with eS1 forming part of the mRNA exit tunnel. uS11 interacts with snoRNA U3. uS11 interacts with MPP10. Component of the ribosomal small subunit (SSU) processome composed of at least 40 protein subunits and snoRNA U3. N-terminally acetylated by acetyltransferase NatA.

Its subcellular location is the cytoplasm. It is found in the nucleus. The protein localises to the nucleolus. In terms of biological role, component of the ribosome, a large ribonucleoprotein complex responsible for the synthesis of proteins in the cell. The small ribosomal subunit (SSU) binds messenger RNAs (mRNAs) and translates the encoded message by selecting cognate aminoacyl-transfer RNA (tRNA) molecules. The large subunit (LSU) contains the ribosomal catalytic site termed the peptidyl transferase center (PTC), which catalyzes the formation of peptide bonds, thereby polymerizing the amino acids delivered by tRNAs into a polypeptide chain. The nascent polypeptides leave the ribosome through a tunnel in the LSU and interact with protein factors that function in enzymatic processing, targeting, and the membrane insertion of nascent chains at the exit of the ribosomal tunnel. uS11 is involved in nucleolar processing of pre-18S ribosomal RNA and ribosome assembly. The polypeptide is Small ribosomal subunit protein uS11A (Saccharomyces cerevisiae (strain ATCC 204508 / S288c) (Baker's yeast)).